Here is a 165-residue protein sequence, read N- to C-terminus: Growth arrest and DNA damage-inducible protein GADD45 alpha (165 aa).

A Phosphothreonine modification is found at Thr2.

Belongs to the GADD45 family. In terms of assembly, interacts with AURKA, PCNA, GADD45GIP1 and MAPK14.

The protein resides in the nucleus. Functionally, might affect PCNA interaction with some CDK (cell division protein kinase) complexes; stimulates DNA excision repair in vitro and inhibits entry of cells into S phase. In T-cells, functions as a regulator of p38 MAPKs by inhibiting p88 phosphorylation and activity. In Bos taurus (Bovine), this protein is Growth arrest and DNA damage-inducible protein GADD45 alpha (GADD45A).